A 429-amino-acid polypeptide reads, in one-letter code: Adenylosuccinate synthetase (429 aa).

Residues 12 to 18 and 40 to 42 contribute to the GTP site; these read GDEGKGK and GHT. Asp13 acts as the Proton acceptor in catalysis. Positions 13 and 40 each coordinate Mg(2+). Residues 13–16, 38–41, Thr129, Arg143, Gln223, Thr238, and Arg302 each bind IMP; these read DEGK and NAGH. His41 acts as the Proton donor in catalysis. 298–304 contributes to the substrate binding site; that stretch reads TVTGRAR. GTP contacts are provided by residues Arg304, 330-332, and 412-414; these read KLD and STS.

Belongs to the adenylosuccinate synthetase family. In terms of assembly, homodimer. Mg(2+) serves as cofactor.

The protein localises to the cytoplasm. The catalysed reaction is IMP + L-aspartate + GTP = N(6)-(1,2-dicarboxyethyl)-AMP + GDP + phosphate + 2 H(+). Its pathway is purine metabolism; AMP biosynthesis via de novo pathway; AMP from IMP: step 1/2. Its function is as follows. Plays an important role in the de novo pathway of purine nucleotide biosynthesis. Catalyzes the first committed step in the biosynthesis of AMP from IMP. The polypeptide is Adenylosuccinate synthetase (Acidiphilium cryptum (strain JF-5)).